Here is a 385-residue protein sequence, read N- to C-terminus: 3-hydroxyisobutyryl-CoA hydrolase, mitochondrial (385 aa).

The substrate site is built by Glu120, Gly145, Glu168, and Asp176.

Belongs to the enoyl-CoA hydratase/isomerase family.

It is found in the mitochondrion. The catalysed reaction is 3-hydroxy-2-methylpropanoyl-CoA + H2O = 3-hydroxy-2-methylpropanoate + CoA + H(+). It participates in amino-acid degradation; L-valine degradation. Its function is as follows. Hydrolyzes 3-hydroxyisobutyryl-CoA (HIBYL-CoA), a saline catabolite. Has high activity toward isobutyryl-CoA. Could be an isobutyryl-CoA dehydrogenase that functions in valine catabolism. Also hydrolyzes 3-hydroxypropanoyl-CoA. The sequence is that of 3-hydroxyisobutyryl-CoA hydrolase, mitochondrial (hibch) from Xenopus laevis (African clawed frog).